Consider the following 281-residue polypeptide: Probable ABC transporter ATP-binding protein AZC_3926 (281 aa).

The segment at 1–38 (MNVLSMFGRNATRETSSPAATAGRYADEGDWEGDDHQP) is disordered. The 233-residue stretch at 45 to 277 (LAAFGLAKSY…PDVRRLYLGE (233 aa)) folds into the ABC transporter domain. 77-84 (GPNGAGKT) is a binding site for ATP.

This sequence belongs to the ABC transporter superfamily.

The chain is Probable ABC transporter ATP-binding protein AZC_3926 from Azorhizobium caulinodans (strain ATCC 43989 / DSM 5975 / JCM 20966 / LMG 6465 / NBRC 14845 / NCIMB 13405 / ORS 571).